The sequence spans 325 residues: Tetraacyldisaccharide 4'-kinase (325 aa).

Thr55–Thr62 is an ATP binding site.

The protein belongs to the LpxK family.

The enzyme catalyses a lipid A disaccharide + ATP = a lipid IVA + ADP + H(+). Its pathway is glycolipid biosynthesis; lipid IV(A) biosynthesis; lipid IV(A) from (3R)-3-hydroxytetradecanoyl-[acyl-carrier-protein] and UDP-N-acetyl-alpha-D-glucosamine: step 6/6. Functionally, transfers the gamma-phosphate of ATP to the 4'-position of a tetraacyldisaccharide 1-phosphate intermediate (termed DS-1-P) to form tetraacyldisaccharide 1,4'-bis-phosphate (lipid IVA). The polypeptide is Tetraacyldisaccharide 4'-kinase (Salmonella heidelberg (strain SL476)).